Reading from the N-terminus, the 146-residue chain is Acidic phospholipase A2 CM-II (146 aa).

The signal sequence occupies residues 1–21 (MNPAHLLILAAVCVSPLGAFS). A propeptide spanning residues 22–27 (NRPMPL) is cleaved from the precursor. Intrachain disulfides connect Cys38–Cys98, Cys53–Cys145, Cys55–Cys71, Cys70–Cys126, Cys77–Cys119, Cys87–Cys112, and Cys105–Cys117. Positions 54, 56, and 58 each coordinate Ca(2+). The active site involves His74. Asp75 contacts Ca(2+). Residue Asp120 is part of the active site.

Belongs to the phospholipase A2 family. Group I subfamily. D49 sub-subfamily. It depends on Ca(2+) as a cofactor. In terms of tissue distribution, expressed by the venom gland.

The protein localises to the secreted. It carries out the reaction a 1,2-diacyl-sn-glycero-3-phosphocholine + H2O = a 1-acyl-sn-glycero-3-phosphocholine + a fatty acid + H(+). Functionally, PLA2 catalyzes the calcium-dependent hydrolysis of the 2-acyl groups in 3-sn-phosphoglycerides. Is able to suppress the acetylcholine (ACh)-evoked current mediated by alpha-7 (CHRNA7)-similar nAChRs in L.stagnalis neurons (IC(50)=37 nM) and to compete with alpha-bungarotoxin for binding to muscle- and alpha-7 neuronal nAChR types, as well as to AChBPs. In inhibition of alpha-bungarotoxin binding, this toxin is similarly active against T.californica nAChR (IC(50)=1.2 uM), human alpha-7 nAChR (IC(50)=3.2 uM), and L.stagnalis AChBP (IC(50)=1.0 uM), whereas it is not active against A.californica AChBP (IC(50)&gt;100 uM). The polypeptide is Acidic phospholipase A2 CM-II (Naja kaouthia (Monocled cobra)).